Here is a 269-residue protein sequence, read N- to C-terminus: Aquaporin-1 (269 aa).

Topologically, residues 1–11 (MASEIKKKLFW) are cytoplasmic. The chain crosses the membrane as a helical span at residues 12-29 (RAVVAEFLAMTLFVFISI). The Extracellular segment spans residues 30-46 (GSALGFNYPLERNQTLV). The N-linked (GlcNAc...) asparagine glycan is linked to asparagine 42. The helical transmembrane segment at 47–65 (QDNVKVSLAFGLSIATLAQ) threads the bilayer. Residues 66 to 68 (SVG) are Cytoplasmic-facing. Residues 69–82 (HISGAHLNPAVTLG) lie within the membrane without spanning it. An NPA 1 motif is present at residues 76 to 78 (NPA). Over 83-90 (LLLSCQIS) the chain is Cytoplasmic. Residues 91–109 (ILRAVMYIIAQCVGAIVAS) traverse the membrane as a helical segment. The Extracellular portion of the chain corresponds to 110-133 (AILSGITSSLLENSLGRNDLARGV). The helical transmembrane segment at 134–153 (NSGQGLGIEIIGTLQLVLCV) threads the bilayer. Topologically, residues 154–163 (LATTDRRRRD) are cytoplasmic. The chain crosses the membrane as a helical span at residues 164 to 181 (LGGSAPLAIGLSVALGHL). Residues 182–186 (LAIDY) lie on the Extracellular side of the membrane. An intramembrane segment occupies 187-199 (TGCGINPARSFGS). The short motif at 192 to 194 (NPA) is the NPA 2 element. The Extracellular portion of the chain corresponds to 200–206 (AVLTRNF). Asparagine 205 is a glycosylation site (N-linked (GlcNAc...) asparagine). Residues 207–224 (SNHWIFWVGPFIGSALAV) traverse the membrane as a helical segment. Topologically, residues 225–269 (LIYDFILAPRSSDFTDRMKVWTSGQVEEYDLDADDINSRVEMKPK) are cytoplasmic. Serine 247 is modified (phosphoserine). Phosphotyrosine is present on tyrosine 253. Position 262 is a phosphoserine (serine 262).

Belongs to the MIP/aquaporin (TC 1.A.8) family. Homotetramer; each monomer provides an independent water pore. Component of the ankyrin-1 complex in the erythrocyte, composed of ANK1, RHCE, RHAG, SLC4A1, EPB42, GYPA, GYPB and AQP1. Interacts with EPHB2; involved in endolymph production in the inner ear. Identified in a complex with STOM. Interacts (via the N-terminal) with ANK1 (via ANK 1-5 repeats). Interacts (via the C-terminal) with EPB42. Erythrocytes and renal tubules.

Its subcellular location is the cell membrane. The catalysed reaction is H2O(in) = H2O(out). The enzyme catalyses nitric oxide(out) = nitric oxide(in). It carries out the reaction CO2(out) = CO2(in). It catalyses the reaction glycerol(in) = glycerol(out). The catalysed reaction is H2O2(out) = H2O2(in). The enzyme catalyses K(+)(in) = K(+)(out). It carries out the reaction Na(+)(in) = Na(+)(out). Forms a water channel that facilitates the transport of water across cell membranes, playing a crucial role in water homeostasis in various tissues. Could also be permeable to small solutes including hydrogen peroxide, glycerol and gases such as amonnia (NH3), nitric oxide (NO) and carbon dioxide (CO2). Recruited to the ankyrin-1 complex, a multiprotein complex of the erythrocyte membrane, it could be part of a CO2 metabolon, linking facilitated diffusion of CO2 across the membrane, anion exchange of Cl(-)/HCO3(-) and interconversion of dissolved CO2 and carbonic acid in the cytosol. In vitro, it shows non-selective gated cation channel activity and may be permeable to cations like K(+) and Na(+) in vivo. The chain is Aquaporin-1 from Rattus norvegicus (Rat).